A 92-amino-acid chain; its full sequence is Co-chaperonin GroES (92 aa).

This sequence belongs to the GroES chaperonin family. In terms of assembly, heptamer of 7 subunits arranged in a ring. Interacts with the chaperonin GroEL.

Its subcellular location is the cytoplasm. Its function is as follows. Together with the chaperonin GroEL, plays an essential role in assisting protein folding. The GroEL-GroES system forms a nano-cage that allows encapsulation of the non-native substrate proteins and provides a physical environment optimized to promote and accelerate protein folding. GroES binds to the apical surface of the GroEL ring, thereby capping the opening of the GroEL channel. The sequence is that of Co-chaperonin GroES from Thermotoga maritima (strain ATCC 43589 / DSM 3109 / JCM 10099 / NBRC 100826 / MSB8).